The following is a 364-amino-acid chain: tRNA 2-selenouridine synthase (364 aa).

The Rhodanese domain occupies 14–137 (LIADTPIIDV…LRQTAIQATI (124 aa)). C97 acts as the S-selanylcysteine intermediate in catalysis.

Belongs to the SelU family. As to quaternary structure, monomer.

The catalysed reaction is 5-methylaminomethyl-2-thiouridine(34) in tRNA + selenophosphate + (2E)-geranyl diphosphate + H2O + H(+) = 5-methylaminomethyl-2-selenouridine(34) in tRNA + (2E)-thiogeraniol + phosphate + diphosphate. The enzyme catalyses 5-methylaminomethyl-2-thiouridine(34) in tRNA + (2E)-geranyl diphosphate = 5-methylaminomethyl-S-(2E)-geranyl-thiouridine(34) in tRNA + diphosphate. It carries out the reaction 5-methylaminomethyl-S-(2E)-geranyl-thiouridine(34) in tRNA + selenophosphate + H(+) = 5-methylaminomethyl-2-(Se-phospho)selenouridine(34) in tRNA + (2E)-thiogeraniol. It catalyses the reaction 5-methylaminomethyl-2-(Se-phospho)selenouridine(34) in tRNA + H2O = 5-methylaminomethyl-2-selenouridine(34) in tRNA + phosphate. Functionally, involved in the post-transcriptional modification of the uridine at the wobble position (U34) of tRNA(Lys), tRNA(Glu) and tRNA(Gln). Catalyzes the conversion of 2-thiouridine (S2U-RNA) to 2-selenouridine (Se2U-RNA). Acts in a two-step process involving geranylation of 2-thiouridine (S2U) to S-geranyl-2-thiouridine (geS2U) and subsequent selenation of the latter derivative to 2-selenouridine (Se2U) in the tRNA chain. The sequence is that of tRNA 2-selenouridine synthase from Escherichia coli O17:K52:H18 (strain UMN026 / ExPEC).